A 591-amino-acid polypeptide reads, in one-letter code: V-type ATP synthase alpha chain (591 aa).

Residue 242–249 (GPFGAGKT) participates in ATP binding.

Belongs to the ATPase alpha/beta chains family.

The catalysed reaction is ATP + H2O + 4 H(+)(in) = ADP + phosphate + 5 H(+)(out). In terms of biological role, produces ATP from ADP in the presence of a proton gradient across the membrane. The V-type alpha chain is a catalytic subunit. The chain is V-type ATP synthase alpha chain (atpA) from Chlamydia pneumoniae (Chlamydophila pneumoniae).